We begin with the raw amino-acid sequence, 465 residues long: Putrescine aminotransferase (465 aa).

Residues 150–151 (GT) and glutamine 274 contribute to the pyridoxal 5'-phosphate site. Lysine 300 carries the post-translational modification N6-(pyridoxal phosphate)lysine. Position 332 (threonine 332) interacts with pyridoxal 5'-phosphate.

It belongs to the class-III pyridoxal-phosphate-dependent aminotransferase family. Putrescine aminotransferase subfamily. Pyridoxal 5'-phosphate serves as cofactor.

The enzyme catalyses an alkane-alpha,omega-diamine + 2-oxoglutarate = an omega-aminoaldehyde + L-glutamate. It catalyses the reaction putrescine + 2-oxoglutarate = 1-pyrroline + L-glutamate + H2O. It carries out the reaction cadaverine + 2-oxoglutarate = 5-aminopentanal + L-glutamate. It functions in the pathway amine and polyamine degradation; putrescine degradation; 4-aminobutanal from putrescine (transaminase route): step 1/1. Functionally, catalyzes the aminotransferase reaction from putrescine to 2-oxoglutarate, leading to glutamate and 4-aminobutanal, which spontaneously cyclizes to form 1-pyrroline. This is the first step in one of two pathways for putrescine degradation, where putrescine is converted into 4-aminobutanoate (gamma-aminobutyrate or GABA) via 4-aminobutanal. Also functions as a cadaverine transaminase in a a L-lysine degradation pathway to succinate that proceeds via cadaverine, glutarate and L-2-hydroxyglutarate. This Cronobacter sakazakii (strain ATCC BAA-894) (Enterobacter sakazakii) protein is Putrescine aminotransferase.